Reading from the N-terminus, the 548-residue chain is Asparagine--tRNA ligase, cytoplasmic (548 aa).

The disordered stretch occupies residues 1 to 25; that stretch reads MVLAELYVSDREGSDATGDGTKEKP. Over residues 8 to 25 the composition is skewed to basic and acidic residues; sequence VSDREGSDATGDGTKEKP. At Ser61 the chain carries Phosphoserine. Residues 69 to 91 form a disordered region; the sequence is MWHREQMKSESREKKEAEDSLRR. The segment covering 71–91 has biased composition (basic and acidic residues); that stretch reads HREQMKSESREKKEAEDSLRR. The residue at position 244 (Lys244) is an N6-acetyllysine. Ser482 is modified (phosphoserine). Position 490 is an N6-acetyllysine (Lys490).

This sequence belongs to the class-II aminoacyl-tRNA synthetase family. In terms of assembly, homodimer.

It is found in the cytoplasm. It catalyses the reaction tRNA(Asn) + L-asparagine + ATP = L-asparaginyl-tRNA(Asn) + AMP + diphosphate + H(+). Functionally, catalyzes the attachment of asparagine to tRNA(Asn) in a two-step reaction: asparagine is first activated by ATP to form Asn-AMP and then transferred to the acceptor end of tRNA(Asn). In addition to its essential role in protein synthesis, acts as a signaling molecule that induced migration of CCR3-expressing cells. Has an essential role in the development of the cerebral cortex, being required for proper proliferation of radial glial cells. The polypeptide is Asparagine--tRNA ligase, cytoplasmic (Homo sapiens (Human)).